The sequence spans 499 residues: Probable dipeptidase B (499 aa).

C26 is a catalytic residue.

It belongs to the peptidase C69 family.

The catalysed reaction is an L-aminoacyl-L-amino acid + H2O = 2 an L-alpha-amino acid. This chain is Probable dipeptidase B (pepDB), found in Streptococcus pyogenes serotype M6 (strain ATCC BAA-946 / MGAS10394).